The sequence spans 121 residues: MKEGIHPDYKATKVLCACGNVIETRSVRGDFHIEICSNCHPFFTGKQKIMDTAGRIERFKTRYAATPAKAEPAKKAPAAEPAKKVEAAKENRAAKRAKAGKSKKSEAAPAAEAPAADAKPE.

The tract at residues 1–97 is large ribosomal subunit protein bL31; the sequence is MKEGIHPDYK…AKENRAAKRA (97 aa). The Zn(2+) site is built by C16, C18, C36, and C39. Low complexity predominate over residues 65–80; that stretch reads ATPAKAEPAKKAPAAE. Residues 65-121 are disordered; the sequence is ATPAKAEPAKKAPAAEPAKKVEAAKENRAAKRAKAGKSKKSEAAPAAEAPAADAKPE. Positions 74–121 are unknown; the sequence is KKAPAAEPAKKVEAAKENRAAKRAKAGKSKKSEAAPAAEAPAADAKPE. A compositionally biased stretch (basic and acidic residues) spans 81-93; that stretch reads PAKKVEAAKENRA. The span at 107-121 shows a compositional bias: low complexity; sequence AAPAAEAPAADAKPE.

It belongs to the bacterial ribosomal protein bL31 family. Type A subfamily. In terms of assembly, part of the 50S ribosomal subunit. Zn(2+) serves as cofactor.

Functionally, binds the 23S rRNA. The chain is Large ribosomal subunit protein bL31 from Anaeromyxobacter dehalogenans (strain 2CP-C).